A 147-amino-acid chain; its full sequence is Hemoglobin subunit deltaH (147 aa).

Residues 3–147 (RLTDSEKAEV…MANALAHKYH (145 aa)) enclose the Globin domain. His64 and His93 together coordinate heme b.

Belongs to the globin family. As to quaternary structure, heterotetramer of two delta chains and two alpha chains. Red blood cells.

The sequence is that of Hemoglobin subunit deltaH (HBD) from Dendrohyrax dorsalis (Beecroft's tree hyrax).